Reading from the N-terminus, the 438-residue chain is Vasoactive intestinal polypeptide receptor 2 (438 aa).

A signal peptide spans 1–23; it reads MRTLLPPALLTCWLLAPVNSIHP. Residues 24-124 lie on the Extracellular side of the membrane; the sequence is ECRFHLEIQE…EDESKITFYI (101 aa). 3 disulfide bridges follow: Cys38-Cys61, Cys52-Cys93, and Cys75-Cys109. 3 N-linked (GlcNAc...) asparagine glycosylation sites follow: Asn58, Asn88, and Asn92. The chain crosses the membrane as a helical span at residues 125–150; that stretch reads LVKAIYTLGYSVSLMSLATGSIILCL. Residues 151-158 are Cytoplasmic-facing; it reads FRKLHCTR. The chain crosses the membrane as a helical span at residues 159–180; that stretch reads NYIHLNLFLSFILRAISVLVKD. Topologically, residues 181–203 are extracellular; the sequence is DVLYSSSGTLHCPDQPSSWVGCK. Cys202 and Cys271 are oxidised to a cystine. A helical membrane pass occupies residues 204–228; it reads LSLVFLQYCIMANFFWLLVEGLYLH. Residues 229-239 lie on the Cytoplasmic side of the membrane; sequence TLLVAMLPPRR. Residues 240-261 form a helical membrane-spanning segment; that stretch reads CFLAYLLIGWGLPTVCIGAWTA. At 262-280 the chain is on the extracellular side; it reads ARLYLEDTGCWDTNDHSVP. A helical transmembrane segment spans residues 281-304; that stretch reads WWVIRIPILISIIVNFVLFISIIR. Residues 305-325 lie on the Cytoplasmic side of the membrane; that stretch reads ILLQKLTSPDVGGNDQSQYKR. Residues 326 to 346 form a helical membrane-spanning segment; it reads LAKSTLLLIPLFGVHYMVFAV. At 347–354 the chain is on the extracellular side; sequence FPISISSK. A helical transmembrane segment spans residues 355–378; it reads YQILFELCLGSFQGLVVAVLYCFL. The Cytoplasmic portion of the chain corresponds to 379 to 438; that stretch reads NSEVQCELKRKWRSRCPTPSASRDYRVCGSSFSRNGSEGALQFHRGSRAQSFLQTETSVI.

It belongs to the G-protein coupled receptor 2 family. As to quaternary structure, interacts with ADCYAP1/PACAP (via N-terminal extracellular domain); activated by PACAP27 and CAPAC38 neuropeptides. Interacts with VIP; the interaction results in VIPR1 activation. In terms of tissue distribution, expressed in CD4+ T-cells, but not in CD8+ T-cells. Expressed in the T-cell lines Jurkat, Peer, MOLT-4, HSB, YT and SUP-T1, but not in the T-cell lines HARRIS and HuT 78.

It localises to the cell membrane. Functionally, g protein-coupled receptor activated by the neuropeptides vasoactive intestinal peptide (VIP) and pituitary adenylate cyclase-activating polypeptide (ADCYAP1/PACAP). Binds VIP and both PACAP27 and PACAP38 bioactive peptides with the following order of potency PACAP38 = VIP &gt; PACAP27. Ligand binding causes a conformation change that triggers signaling via guanine nucleotide-binding proteins (G proteins) and modulates the activity of downstream effectors. Activates cAMP-dependent pathway. May be coupled to phospholipase C. This chain is Vasoactive intestinal polypeptide receptor 2, found in Homo sapiens (Human).